We begin with the raw amino-acid sequence, 486 residues long: Achaete-scute complex protein T8 (486 aa).

Disordered regions lie at residues 1 to 26 (MAAL…GIKT) and 75 to 158 (AAST…LPLP). Positions 75–86 (AASTTNTTPISS) are enriched in polar residues. Residues 159-223 (QAVARRNARE…RMAVEYIRSL (65 aa)) form the bHLH domain.

Efficient DNA binding requires dimerization with another bHLH protein. In terms of tissue distribution, l(1)SC, SC and AC strongly label the presumptive stomatogastric nervous system, while ASE is more prominent in the presumptive procephalic lobe.

Functionally, involved in the determination of the neuronal precursors of optic lobes in the central nervous system. This Drosophila melanogaster (Fruit fly) protein is Achaete-scute complex protein T8 (ase).